Here is a 431-residue protein sequence, read N- to C-terminus: Enolase (431 aa).

Gln167 contacts (2R)-2-phosphoglycerate. The active-site Proton donor is the Glu209. 3 residues coordinate Mg(2+): Asp246, Glu290, and Asp317. (2R)-2-phosphoglycerate is bound by residues Lys342, Arg371, Ser372, and Lys393. Lys342 functions as the Proton acceptor in the catalytic mechanism.

It belongs to the enolase family. Component of the RNA degradosome, a multiprotein complex involved in RNA processing and mRNA degradation. Requires Mg(2+) as cofactor.

The protein resides in the cytoplasm. It localises to the secreted. Its subcellular location is the cell surface. It carries out the reaction (2R)-2-phosphoglycerate = phosphoenolpyruvate + H2O. The protein operates within carbohydrate degradation; glycolysis; pyruvate from D-glyceraldehyde 3-phosphate: step 4/5. Catalyzes the reversible conversion of 2-phosphoglycerate (2-PG) into phosphoenolpyruvate (PEP). It is essential for the degradation of carbohydrates via glycolysis. This chain is Enolase, found in Serratia proteamaculans (strain 568).